The primary structure comprises 416 residues: MKSERKAEIIAVGSELLLGQITNTNAQFISKQLAEIGVNVYYHTAVGDNPERLKRAIQVAQERSNFIIFSGGLGPTKDDLTKETIASTLGKELVLNEEAFESIQEYFRKTGRDMSPNNRKQALVLEGSDVLVNRFGMAPGMFIQENDTFYMLLPGPPSELHPMFENEAKPLISEKLGLKEKIVSVVLRFFGIGESQLETDLEDLIDAQTNPTIAPLASDGEVTLRLTAKHEDEKETERLLKETEAKILARVGEYFYGYGETSLVREASKALRDHGKTVAAAESLTGGMFSEWLTDLEGASSILSGSIVCYTNQVKQQVLGCREETLSSHGAVSKECALELAEGVRKLTGSDIGISFTGVAGPDTHEGQPVGKVFIGLSTKDHTDVFEWMFTGSRSGIRKRAVKYGLHHLLNLLKES.

Belongs to the CinA family.

The sequence is that of Putative competence-damage inducible protein from Bacillus pumilus (strain SAFR-032).